A 203-amino-acid polypeptide reads, in one-letter code: Acid phosphatase (203 aa).

Catalysis depends on His-13, which acts as the Tele-phosphohistidine intermediate. Glu-85 (proton donor/acceptor) is an active-site residue.

This sequence belongs to the phosphoglycerate mutase family. In terms of assembly, homodimer.

It catalyses the reaction a phosphate monoester + H2O = an alcohol + phosphate. It carries out the reaction beta-D-fructose 1,6-bisphosphate + H2O = beta-D-fructose 6-phosphate + phosphate. Its pathway is carbohydrate biosynthesis; gluconeogenesis. In contrast to classical FBPases, is resistant to inhibition by lithium. In terms of biological role, phosphatase with a broad specificity. Can dephosphorylate a variety of substrates including phosphorylated sugars like fructose-6-phosphate (F6P). Is able to function in vivo as a fructose-1,6-bisphosphatase (FBPase) and to maintain gluconeogenesis when the classical FBPase GlpX is absent. Shows negligible phosphoglycerate mutase activity. Has no phosphatase activity against 3-phosphoglycerate, 2,3-bisphosphoglycerate, or hydrophobic substrates such as alpha-napthyl phosphate. The polypeptide is Acid phosphatase (Mycobacterium tuberculosis (strain ATCC 25618 / H37Rv)).